Here is a 321-residue protein sequence, read N- to C-terminus: Probable endolytic peptidoglycan transglycosylase RlpA (321 aa).

This sequence belongs to the RlpA family.

Its function is as follows. Lytic transglycosylase with a strong preference for naked glycan strands that lack stem peptides. The polypeptide is Probable endolytic peptidoglycan transglycosylase RlpA (Synechocystis sp. (strain ATCC 27184 / PCC 6803 / Kazusa)).